The following is a 207-amino-acid chain: 3-isopropylmalate dehydratase small subunit (207 aa).

This sequence belongs to the LeuD family. LeuD type 1 subfamily. As to quaternary structure, heterodimer of LeuC and LeuD.

It carries out the reaction (2R,3S)-3-isopropylmalate = (2S)-2-isopropylmalate. It participates in amino-acid biosynthesis; L-leucine biosynthesis; L-leucine from 3-methyl-2-oxobutanoate: step 2/4. Functionally, catalyzes the isomerization between 2-isopropylmalate and 3-isopropylmalate, via the formation of 2-isopropylmaleate. The protein is 3-isopropylmalate dehydratase small subunit of Rhodospirillum rubrum (strain ATCC 11170 / ATH 1.1.1 / DSM 467 / LMG 4362 / NCIMB 8255 / S1).